We begin with the raw amino-acid sequence, 338 residues long: Malate dehydrogenase, mitochondrial (338 aa).

A mitochondrion-targeting transit peptide spans 1 to 24 (MLSALARPAGAALRRSFSTSAQNN). NAD(+) is bound by residues 31-37 (GASGGIG) and Asp57. O-linked (GlcNAc) serine glycosylation occurs at Ser33. N6-acetyllysine; alternate occurs at positions 78 and 91. Lys78 and Lys91 each carry N6-succinyllysine; alternate. Substrate-binding residues include Arg104 and Arg110. Residues Asn117 and 140 to 142 (ISN) each bind NAD(+). Asn142 contacts substrate. N6-acetyllysine is present on Lys165. Arg176 serves as a coordination point for substrate. Lys185 carries the post-translational modification N6-acetyllysine; alternate. An N6-succinyllysine; alternate modification is found at Lys185. His200 (proton acceptor) is an active-site residue. Position 203 is an N6-succinyllysine (Lys203). Lys215 and Lys239 each carry N6-acetyllysine; alternate. Lys215 and Lys239 each carry N6-succinyllysine; alternate. Lys239 is subject to N6-malonyllysine; alternate. Ser246 bears the Phosphoserine mark. Met251 is an NAD(+) binding site. Lys269 carries the post-translational modification N6-succinyllysine. N6-acetyllysine; alternate is present on residues Lys296, Lys301, Lys307, Lys314, and Lys324. An N6-succinyllysine; alternate mark is found at Lys296, Lys301, Lys307, Lys314, and Lys324. Lys307 carries the post-translational modification N6-malonyllysine; alternate. A Phosphoserine modification is found at Ser326. An N6-acetyllysine; alternate mark is found at Lys328, Lys329, and Lys335. Lys328 carries the post-translational modification N6-succinyllysine; alternate. Lys329 is subject to N6-malonyllysine; alternate. Position 335 is an N6-succinyllysine; alternate (Lys335).

Belongs to the LDH/MDH superfamily. MDH type 1 family. In terms of assembly, homodimer. Post-translationally, acetylation is enhanced after treatment either with trichostin A (TCA) or with nicotinamide (NAM) with the appearance of tri- and tetraacetylations. Glucose also increases acetylation.

The protein localises to the mitochondrion matrix. It carries out the reaction (S)-malate + NAD(+) = oxaloacetate + NADH + H(+). Its activity is regulated as follows. Enzyme activity is enhanced by acetylation. This chain is Malate dehydrogenase, mitochondrial (MDH2), found in Bos taurus (Bovine).